Here is a 329-residue protein sequence, read N- to C-terminus: G-protein coupled bile acid receptor 1 (329 aa).

Residues 1–19 (MTSNSTREVPSPVPAGALG) are Extracellular-facing. An N-linked (GlcNAc...) asparagine glycan is attached at Asn4. A helical membrane pass occupies residues 20–40 (LSLALASLIVAANLLLAVGIA). Residues 41-52 (GDRRLRSPPAGC) lie on the Cytoplasmic side of the membrane. Residues 53–73 (FFLSLLLAGLLTGLALPALPV) traverse the membrane as a helical segment. Over 74–85 (LWSQSRRGYWSC) the chain is Extracellular. A disulfide bridge connects residues Cys85 and Cys155. A helical membrane pass occupies residues 86–106 (LFLYLAPNFCFLSLLANLLLV). Topologically, residues 107-125 (HGERYMAVLRPLRPRGSMR) are cytoplasmic. Residues 126 to 146 (LALLLTWAAPLLFASLPALGW) traverse the membrane as a helical segment. The Extracellular segment spans residues 147–165 (NHWAPGGNCSSQAVFPAPY). Asn154 carries N-linked (GlcNAc...) asparagine glycosylation. The helical transmembrane segment at 166-186 (LYLEIYGLLLPAVGAAALLSV) threads the bilayer. At 187–230 (RVLVTAHRQLQDIRRLERAVCRGAPSALARALTWRQARAQAGAT) the chain is on the cytoplasmic side. A helical membrane pass occupies residues 231-251 (LLFGLCWGPYVATLLLSVLAF). Residues 252-261 (EQRPPLGPGT) are Extracellular-facing. A helical membrane pass occupies residues 262 to 282 (LLSLISLGSASAAAVPVAMGL). The Cytoplasmic portion of the chain corresponds to 283–329 (GDQRYTGPWRVAAQKWLRMLRGRPQSSPGPSTAYHTSSQSSVDLDLN). Residues 304–329 (GRPQSSPGPSTAYHTSSQSSVDLDLN) are disordered. Residues 306-329 (PQSSPGPSTAYHTSSQSSVDLDLN) show a composition bias toward polar residues.

The protein belongs to the G-protein coupled receptor 1 family.

The protein resides in the cell membrane. In terms of biological role, receptor for bile acid. Bile acid-binding induces its internalization, activation of extracellular signal-regulated kinase and intracellular cAMP production. May be involved in the suppression of macrophage functions by bile acids. Involved in bile acid promoted GLP1R secretion. The sequence is that of G-protein coupled bile acid receptor 1 (GPBAR1) from Bos taurus (Bovine).